Reading from the N-terminus, the 1288-residue chain is MNLLLYLLLLVPWVLGSEDGCPAKCTCDKKGFTVDCSNAGLTRIPKGISSNVRSLVLRNNRIHTLIKSDLEGFPLLESLVLTHNKIKVVEENILDHLPELKRLSLSHNLLVYIPPLASESRPLASLNLKRNHIQFIDERWLLQYFPELVQIDLSHNRIQSLRTKLFENLPSLTHAHLHANPWNCDCRVTKVKALLRKVEWERKAYCTNPVELRHQAIDEVEESLLKCAKPEEESWTGDEFKLVCTKNASSSRPVVWLYENAEVDSSSLDGYEIHDSVITVPRKTNVNQMTCTYDYEHVPHHRRLRQSHHSNGAPQFTYKPRDNSYREGSEVKVNCEVMGTPKPSITWYHNGVRFASSRKKQLGLSNNVLRIYPFLEEDSGRYTCEAVNSLGKVSHTFSLDLISSIPPNIYEGPQSVSQNIGGEVVFVCKAKGNPTPDYTWSFDGSTIGHIKGRFMVSDDGTELXISNIEKKDEGYYSCMAGNPVGAMSADAKLTVIGGETRKSSTPQIDEELLRAIAQKARQNVESAVEKTRKQLNQDKITNTNDLKRLFRFSTPKQAVELSKAREIYEESVRLVREHVEKGLILNVDELHPNNVSYESVLHVTHVQALMGLSGCHTGQFKNPCTDTCFHNKYRSFDGQCNNKNKPMNGVSLMPLRRLLKPVYENGFNTPVGWEKGKLYNGYPMPNVREVSRQLVATETITPHRKLSSMVMQWGQFVDHDLTHTVTALSRHSYATGAFCNRTCDNLDPCFNIPLSPSDPRVISESAKYPCIEFERSAAVCGSGETSLVFNRVTYREQMNALTSFLDASNVYGSNEVQAQELRDTYNNNGQLRYDITSAAGKEYLPFEKDSNMDCRRNFSEENPIRCFLAGDLRANEQLALAATHTIFVREHNRIAKKLKKMNGNWDGEVIYHETRKIIGAMMQHITFKHWLPVVFGGQEQMDKFVGKYQGYDPAIDSSVTNAFATAAFRFGHTIINPTLFRLGNDFMSIKQGHIALHKAFFTPELVLTEGGIDPLLRGLFASPLKHPMPTQLLNMELIEKLFMKGHEVSLDLAVMNIQRSRDHGLPSYTEYRQFCNLPVPARWEDMKGYIKDDMIIQKLRGLYGVPQNIDLWVGGIVEEKLENGLFGPTFACIIGEQFRKMRDGDRFWYEKDGVFTPEQMKEIKKVTLARLLCDNGDEIDRIQKDVFMYPGKEKENYGRCEDTEMMDLKAWSKCCDDVCPTMLDRILRSRHRGSRLHGCNQNGLWRPEGAKWIPPNEYCTEEAVFGAPPKKTVLTTEVHSSQRNSVLY.

Residues 1 to 16 form the signal peptide; the sequence is MNLLLYLLLLVPWVLG. Residues 17–51 form the LRRNT domain; it reads SEDGCPAKCTCDKKGFTVDCSNAGLTRIPKGISSN. LRR repeat units follow at residues 27–49, 50–72, 73–96, 97–120, 122–143, 145–168, and 204–227; these read CDKKGFTVDCSNAGLTRIPKGIS, SNVRSLVLRNNRIHTLIKSDLEG, FPLLESLVLTHNKIKVVEENILDH, LPELKRLSLSHNLLVYIPPLASES, PLASLNLKRNHIQFIDERWLLQ, FPELVQIDLSHNRIQSLRTKLFEN, and AYCTNPVELRHQAIDEVEESLLKC. The LRRCT domain maps to 180 to 228; that stretch reads NPWNCDCRVTKVKALLRKVEWERKAYCTNPVELRHQAIDEVEESLLKCA. Residue asparagine 247 is glycosylated (N-linked (GlcNAc...) asparagine). Residues 304-323 form a disordered region; it reads LRQSHHSNGAPQFTYKPRDN. Ig-like C2-type domains follow at residues 314 to 400 and 407 to 494; these read PQFT…FSLD and PNIY…AKLT. Cysteines 335 and 384 form a disulfide. 2 LRR repeats span residues 356-381 and 387-412; these read SSRKKQLGLSNNVLRIYPFLEEDSGR and VNSLGKVSHTFSLDLISSIPPNIYEG. A disulfide bridge links cysteine 428 with cysteine 478. Asparagine 594 carries an N-linked (GlcNAc...) asparagine glycan. Cysteine 624 and cysteine 640 are oxidised to a cystine. Aspartate 718 lines the heme b pocket. The active-site Proton acceptor is histidine 719. Aspartate 720 contacts Ca(2+). Disulfide bonds link cysteine 739–cysteine 749 and cysteine 743–cysteine 770. A glycan (N-linked (GlcNAc...) asparagine) is linked at asparagine 740. Ca(2+) contacts are provided by threonine 802, phenylalanine 804, aspartate 806, and serine 808. Asparagine 857 is a glycosylation site (N-linked (GlcNAc...) asparagine). Positions 876 and 972 each coordinate heme b. 2 LRR repeats span residues 998-1022 and 1049-1073; these read KAFFTPELVLTEGGIDPLLRGLFAS and SLDLAVMNIQRSRDHGLPSYTEYRQ. 2 disulfide bridges follow: cysteine 1075–cysteine 1132 and cysteine 1173–cysteine 1200. The LRR 12 repeat unit spans residues 1168–1189; it reads LARLLCDNGDEIDRIQKDVFMY.

It belongs to the peroxidase family. XPO subfamily. It depends on Ca(2+) as a cofactor. Heme b is required as a cofactor.

The protein localises to the secreted. It is found in the extracellular space. Its subcellular location is the extracellular matrix. It catalyses the reaction L-lysyl-[collagen] + L-methionyl-[collagen] + H2O2 = [collagen]-L-lysyl-N-S-L-methionyl-[collagen] + 2 H2O + H(+). It carries out the reaction bromide + H2O2 = hypobromite + H2O. The catalysed reaction is L-lysyl-[collagen] + L-methionyl-[collagen] + hypobromite = [collagen]-L-lysyl-N-S-L-methionyl-[collagen] + bromide + H2O + H(+). The enzyme catalyses L-tyrosyl-[protein] + bromide + H2O2 + H(+) = 3-bromo-L-tyrosyl-[protein] + 2 H2O. It catalyses the reaction hypobromite + L-tyrosyl-[protein] + H(+) = 3-bromo-L-tyrosyl-[protein] + H2O. Its function is as follows. Catalyzes the two-electron oxidation of bromide by hydrogen peroxide and generates hypobromite as a reactive intermediate which mediates the formation of sulfilimine cross-links between methionine and hydroxylysine residues within an uncross-linked collagen IV NC1 hexamer. Plays a role in the attachment of tissues and in axonal guidance during early developmental stages. May functionally antagonize the peroxidasin pxn-2 to maintain neuronal development. This is Peroxidasin homolog from Caenorhabditis briggsae.